Reading from the N-terminus, the 437-residue chain is Pterin deaminase (437 aa).

The a divalent metal cation site is built by His-80 and His-82. Residue Lys-85 coordinates substrate. His-231 contacts a divalent metal cation. The active-site Proton donor is the Glu-234. An a divalent metal cation-binding site is contributed by Asp-331. 331–332 (DN) provides a ligand contact to substrate.

It belongs to the metallo-dependent hydrolases superfamily. Pterin deaminase family. It depends on a divalent metal cation as a cofactor.

It catalyses the reaction a 2-amino-4-hydroxypteridine + H2O + H(+) = a 2,4-dihydroxypteridine + NH4(+). It carries out the reaction L-sepiapterin + H2O + H(+) = (S)-xanthopterin-B2 + NH4(+). In terms of biological role, catalyzes the deamination of many pterin metabolites, such as formylpterin, pterin-6-carboxylate, pterin-7-carboxylate, pterin, hydroxymethylpterin, biopterin, D-(+)-neopterin, isoxanthopterin, sepiapterin, folate, xanthopterin, and 7,8-dihydrohydroxymethylpterin. May be involved in a degradative pathway for catabolizing pterin rings. The chain is Pterin deaminase from Rhizobium rhizogenes (strain K84 / ATCC BAA-868) (Agrobacterium radiobacter).